Reading from the N-terminus, the 435-residue chain is MEGQTPGSRGLPEKPHPATAAATLSSMGAVFILMKSALGAGLLNFPWAFSKAGGVVPAFLVELVSLVFLISGLVILGYAAAVSGQATYQGVVRGLCGPAIGKLCEACFLLNLLMISVAFLRVIGDQLEKLCDSLLSGTPPAPQPWYADQRFTLPLLSVLVILPLSAPREIAFQKYTSILGTLAACYLALVITVQYYLWPQGLVRESHPSLSPASWTSVFSVFPTICFGFQCHEAAVSIYCSMRKRSLSHWALVSVLSLLACCLIYSLTGVYGFLTFGTEVSADVLMSYPGNDMVIIVARVLFAVSIVTVYPIVLFLGRSVMQDFWRRSCLGGWGPSALADPSGLWVRMPLTILWVTVTLAMALFMPDLSEIVSIIGGISSFFIFIFPGLCLICAMGVEPIGPRVKCCLEVWGVVSVLVGTFIFGQSTAAAVWEMF.

A run of 11 helical transmembrane segments spans residues 29-49, 55-75, 100-120, 151-171, 178-198, 218-240, 250-270, 295-315, 348-368, 374-394, and 410-430; these read AVFI…PWAF, VVPA…GLVI, IGKL…VAFL, FTLP…REIA, ILGT…YYLW, VFSV…SIYC, WALV…LTGV, IIVA…IVLF, MPLT…MPDL, IIGG…LICA, and VWGV…TAAA.

It belongs to the amino acid/polyamine transporter 2 family. Expressed in fetal and adult brain, and spinal cord. In the brain, it is localized in the cell body and axon of the majority of neuronal cells and in a subset of glial cells. Found throughout the neuronal retina, with higher expression levels in the inner and outer plexiform layers and the photoreceptor layer. Very weak expression is also present in the kidneys, thymus, and testes.

It localises to the membrane. The protein resides in the cytoplasm. It is found in the cell cortex. The protein localises to the cell projection. Its subcellular location is the axon. It carries out the reaction L-glutamine(out) = L-glutamine(in). It catalyses the reaction L-alanine(in) = L-alanine(out). The enzyme catalyses L-histidine(out) = L-histidine(in). The catalysed reaction is L-aspartate(out) = L-aspartate(in). It carries out the reaction L-arginine(in) = L-arginine(out). It catalyses the reaction L-leucine(in) = L-leucine(out). Electrogenic sodium-dependent amino acid transporter with a preference for L-glutamine, L-alanine, L-histidine, L-aspartate and L-arginine. May facilitate glutamine uptake in both excitatory and inhibitory neurons. The transport mechanism and stoichiometry remain to be elucidated. The protein is Solute carrier family 38 member 8 of Homo sapiens (Human).